A 517-amino-acid chain; its full sequence is 6-phosphogluconate dehydrogenase, decarboxylating (517 aa).

NADP(+) is bound by residues 35-40 (GLAVMG), 58-60 (NRT), 100-102 (VKA), and N128. Substrate-binding positions include N128 and 154–156 (SGG). K208 serves as the catalytic Proton acceptor. 211 to 212 (HN) is a binding site for substrate. The active-site Proton donor is E215. Y216, K286, R313, R474, and H480 together coordinate substrate.

This sequence belongs to the 6-phosphogluconate dehydrogenase family. In terms of assembly, homodimer.

It catalyses the reaction 6-phospho-D-gluconate + NADP(+) = D-ribulose 5-phosphate + CO2 + NADPH. It functions in the pathway carbohydrate degradation; pentose phosphate pathway; D-ribulose 5-phosphate from D-glucose 6-phosphate (oxidative stage): step 3/3. In terms of biological role, catalyzes the oxidative decarboxylation of 6-phosphogluconate to ribulose 5-phosphate and CO(2), with concomitant reduction of NADP to NADPH. The chain is 6-phosphogluconate dehydrogenase, decarboxylating (DOR14) from Candida albicans (Yeast).